Consider the following 254-residue polypeptide: 3-oxo-5-alpha-steroid 4-dehydrogenase 2 (254 aa).

Transmembrane regions (helical) follow at residues 8–28, 72–92, 146–166, and 206–226; these read VPVL…LCLG, PRSL…AHYF, FSFG…SDYT, and LATW…FLGM.

It belongs to the steroid 5-alpha reductase family. In terms of tissue distribution, expressed in high levels in the prostate and many other androgen-sensitive tissues.

It localises to the microsome membrane. It is found in the endoplasmic reticulum membrane. It catalyses the reaction a 3-oxo-5alpha-steroid + NADP(+) = a 3-oxo-Delta(4)-steroid + NADPH + H(+). It carries out the reaction 17beta-hydroxy-5alpha-androstan-3-one + NADP(+) = testosterone + NADPH + H(+). The enzyme catalyses 5alpha-pregnane-3,20-dione + NADP(+) = progesterone + NADPH + H(+). Functionally, converts testosterone (T) into 5-alpha-dihydrotestosterone (DHT) and progesterone or corticosterone into their corresponding 5-alpha-3-oxosteroids. It plays a central role in sexual differentiation and androgen physiology. The polypeptide is 3-oxo-5-alpha-steroid 4-dehydrogenase 2 (Srd5a2) (Rattus norvegicus (Rat)).